Reading from the N-terminus, the 20-residue chain is Pregnancy-associated glycoprotein 71D (20 aa).

N-linked (GlcNAc...) asparagine glycosylation is present at asparagine 4.

Belongs to the peptidase A1 family. Chorionic epithelium (trophectoderm) and placental cotyledons.

The protein resides in the secreted. The protein localises to the extracellular space. This chain is Pregnancy-associated glycoprotein 71D, found in Bison bonasus (European bison).